Consider the following 202-residue polypeptide: Mevalonate-3-phosphate 5-kinase (202 aa).

The enzyme catalyses (R)-3-phosphomevalonate + ATP = (R)-3,5-bisphosphomevalonate + ADP + H(+). Its pathway is isoprenoid biosynthesis; isopentenyl diphosphate biosynthesis via mevalonate pathway. Its function is as follows. Phosphorylates mevalonate 3-phosphate to form mevalonate 3,5-bisphosphate. Functions in an alternative mevalonate pathway, only present in extreme acidophiles of the Thermoplasmatales order, which passes through mevalonate 3-phosphate rather than mevalonate 5-phosphate. This chain is Mevalonate-3-phosphate 5-kinase, found in Thermoplasma acidophilum (strain ATCC 25905 / DSM 1728 / JCM 9062 / NBRC 15155 / AMRC-C165).